A 1023-amino-acid polypeptide reads, in one-letter code: Sodium/potassium-transporting ATPase subunit alpha-1 (1023 aa).

Positions 1-5 (MAFKV) are excised as a propeptide. Over residues 1–11 (MAFKVGRDKYE) the composition is skewed to basic and acidic residues. The disordered stretch occupies residues 1-38 (MAFKVGRDKYEPAAVSEQGDKKGKKGKKDRDMDELKKE). Residues 6–87 (GRDKYEPAAV…NALTPPPTTP (82 aa)) lie on the Cytoplasmic side of the membrane. The residue at position 9 (Lys-9) is an N6-acetyllysine. The residue at position 10 (Tyr-10) is a Phosphotyrosine. Ser-16 is subject to Phosphoserine; by PKC. Lys-21 is modified (N6-acetyllysine). Over residues 28-38 (KDRDMDELKKE) the composition is skewed to basic and acidic residues. A phosphoserine mark is found at Ser-40 and Ser-47. Residues 82–84 (PPP) are phosphoinositide-3 kinase binding. A helical transmembrane segment spans residues 88-108 (EWIKFCRQLFGGFSMLLWIGA). Residues 109–131 (ILCFLAYSIQAATEEEPQNDNLY) lie on the Extracellular side of the membrane. The helical transmembrane segment at 132–152 (LGVVLSAVVIITGCFSYYQEA) threads the bilayer. Residues 153–288 (KSSKIMESFK…GGQTPIAAEI (136 aa)) lie on the Cytoplasmic side of the membrane. Residues 216–235 (SSLTGESEPQTRSPDFTNEN) are disordered. A Phosphoserine modification is found at Ser-228. Tyr-260 is subject to Phosphotyrosine. The helical transmembrane segment at 289–308 (EHFIHIITGVAVFLGVSFFI) threads the bilayer. Residues 309–320 (LSLILEYTWLEA) are Extracellular-facing. The chain crosses the membrane as a helical span at residues 321-338 (VIFLIGIIVANVPEGLLA). Over 339-772 (TVTVCLTLTA…EEGRLIFDNL (434 aa)) the chain is Cytoplasmic. Catalysis depends on Asp-376, which acts as the 4-aspartylphosphate intermediate. Ser-452 and Ser-484 each carry phosphoserine. Lys-487 is an ATP binding site. Phosphotyrosine is present on Tyr-542. Residues 596-717 (RAAVPDAVGK…QGAIVAVTGD (122 aa)) form a mediates interaction with SCN7A region. Position 661 is an N6-succinyllysine (Lys-661). Ser-668 and Ser-675 each carry phosphoserine. Residues Asp-717 and Asp-721 each coordinate Mg(2+). A helical transmembrane segment spans residues 773 to 792 (KKSIAYTLTSNIPEITPFLI). Topologically, residues 793–802 (FIIANIPLPL) are extracellular. The chain crosses the membrane as a helical span at residues 803-823 (GTVTILCIDLGTDMVPAISLA). Over 824 to 843 (YEQAESDIMKRQPRNPKTDK) the chain is Cytoplasmic. The helical transmembrane segment at 844-866 (LVNERLISTAYGQIGMIQALGGF) threads the bilayer. Residues 867–918 (FTYFVILAENGFLPLHLLGLRVDWDDRWINDVEDSYGQQWTYEQRKIVEFTC) are Extracellular-facing. A helical transmembrane segment spans residues 919 to 938 (HTAFFVSIVVVQWADLVICK). The Cytoplasmic segment spans residues 939-951 (TRRNSVFQQGMKN). Ser-943 bears the Phosphoserine; by PKA mark. The helical transmembrane segment at 952–970 (KILIFGLFEETALAAFLSY) threads the bilayer. The Extracellular segment spans residues 971 to 985 (CPGMGVALRMYPLKP). The helical transmembrane segment at 986 to 1006 (TWWFCAFPYSLLIFVYDEVRK) threads the bilayer. Topologically, residues 1007-1023 (LIIRRRPGGWVEKETYY) are cytoplasmic.

The protein belongs to the cation transport ATPase (P-type) (TC 3.A.3) family. Type IIC subfamily. As to quaternary structure, the sodium/potassium-transporting ATPase is composed of a catalytic alpha subunit, an auxiliary non-catalytic beta subunit and an additional regulatory subunit. Interacts with regulatory subunit FXYD1. Interacts with regulatory subunit FXYD3. Interacts with SIK1. Interacts with SLC35G1 and STIM1. Interacts with CLN3; this interaction regulates the sodium/potassium-transporting ATPase complex localization at the plasma membrane. Interacts with SCN7A; activates ATP1A1 P-type sodium:potassium-exchanging transporter activity which indirectly signals to nearby neurons to regulate sodium homeostasis. Post-translationally, phosphorylation on Tyr-10 modulates pumping activity. Phosphorylation of Ser-943 by PKA modulates the response of ATP1A1 to PKC. Dephosphorylation by protein phosphatase 2A (PP2A) following increases in intracellular sodium, leading to increase catalytic activity.

It localises to the cell membrane. The protein resides in the basolateral cell membrane. It is found in the sarcolemma. The protein localises to the cell projection. Its subcellular location is the axon. It localises to the melanosome. It carries out the reaction K(+)(out) + Na(+)(in) + ATP + H2O = K(+)(in) + Na(+)(out) + ADP + phosphate + H(+). This is the catalytic component of the active enzyme, which catalyzes the hydrolysis of ATP coupled with the exchange of sodium and potassium ions across the plasma membrane. This action creates the electrochemical gradient of sodium and potassium ions, providing the energy for active transport of various nutrients. Could also be part of an osmosensory signaling pathway that senses body-fluid sodium levels and controls salt intake behavior as well as voluntary water intake to regulate sodium homeostasis. This Pongo abelii (Sumatran orangutan) protein is Sodium/potassium-transporting ATPase subunit alpha-1 (ATP1A1).